The chain runs to 336 residues: Alcohol dehydrogenase (336 aa).

Positions 37, 58, 89, 92, 95, 103, and 145 each coordinate Zn(2+).

It belongs to the zinc-containing alcohol dehydrogenase family. Zn(2+) is required as a cofactor.

The catalysed reaction is a primary alcohol + NAD(+) = an aldehyde + NADH + H(+). It catalyses the reaction a secondary alcohol + NAD(+) = a ketone + NADH + H(+). This chain is Alcohol dehydrogenase (adh), found in Staphylococcus aureus (strain Mu50 / ATCC 700699).